The sequence spans 294 residues: MANITAQMVKELREKTGAGMMDCKKALVETEGDMEKAIDYLREKGIAKAAKKSDRVASEGMTHVISNEKHAVVLEVNAETDFVAKNDNFQQLVDALAKQILAVRPDSLEDALKTEMPNGQTVQDYITEAITKIGENISLRRFEVKEKADNSAFGEYIHMNGRIGVLTLLEGTTDTTVAKDVAMHIAAINPKYISREDVSTEEVEHEKEVLTQQALNEGKPANIVEKMVEGRLKKYLSEISLEDQPFVKNPDITVGDYVKQSGGKVVSFVRFEVGEGIEKKEDNFVEEVMSQVKK.

The tract at residues 80-83 (TDFV) is involved in Mg(2+) ion dislocation from EF-Tu.

This sequence belongs to the EF-Ts family.

The protein resides in the cytoplasm. Functionally, associates with the EF-Tu.GDP complex and induces the exchange of GDP to GTP. It remains bound to the aminoacyl-tRNA.EF-Tu.GTP complex up to the GTP hydrolysis stage on the ribosome. The polypeptide is Elongation factor Ts (Listeria monocytogenes serotype 4b (strain CLIP80459)).